A 503-amino-acid chain; its full sequence is ATP synthase subunit alpha (503 aa).

169–176 contributes to the ATP binding site; it reads GDRSTGKT.

This sequence belongs to the ATPase alpha/beta chains family. In terms of assembly, F-type ATPases have 2 components, CF(1) - the catalytic core - and CF(0) - the membrane proton channel. CF(1) has five subunits: alpha(3), beta(3), gamma(1), delta(1), epsilon(1). CF(0) has three main subunits: a(1), b(2) and c(9-12). The alpha and beta chains form an alternating ring which encloses part of the gamma chain. CF(1) is attached to CF(0) by a central stalk formed by the gamma and epsilon chains, while a peripheral stalk is formed by the delta and b chains.

It is found in the cell membrane. The catalysed reaction is ATP + H2O + 4 H(+)(in) = ADP + phosphate + 5 H(+)(out). Produces ATP from ADP in the presence of a proton gradient across the membrane. The alpha chain is a regulatory subunit. The sequence is that of ATP synthase subunit alpha from Dehalococcoides mccartyi (strain ATCC BAA-2100 / JCM 16839 / KCTC 5957 / BAV1).